Reading from the N-terminus, the 55-residue chain is Cicadin (55 aa).

Positions 1 to 26 (NEYHGFVDKANNENKRKKQQGRDDFV) are enriched in basic and acidic residues. Positions 1 to 39 (NEYHGFVDKANNENKRKKQQGRDDFVVKPNNFANRRRKD) are disordered.

Its function is as follows. Possesses antifungal activity against B.cinerea, M.arachidicola, F.oxysporum, R.solani and C.comatus. Suppresses the activity of HIV-1 reverse transcriptase and stimulates the proliferation of murine splenocytes. This chain is Cicadin, found in Cicada flammata.